The chain runs to 799 residues: RasGAP-activating-like protein 1 (799 aa).

C2 domains lie at Met-1 to Ile-105 and Val-116 to Phe-231. The Ca(2+) site is built by Asp-21, Asp-27, Asp-74, Asp-76, Asp-82, Asp-149, Asp-155, Asp-202, Asp-204, and Asp-210. The region spanning Gly-316–Leu-544 is the Ras-GAP domain. A Phosphothreonine modification is found at Thr-400. Residues Thr-565–Ala-672 form the PH domain. The segment at Asn-674–Ala-710 adopts a Btk-type zinc-finger fold. Residues His-682, Cys-693, Cys-694, and Cys-704 each contribute to the Zn(2+) site.

Ca(2+) serves as cofactor.

Probable inhibitory regulator of the Ras-cyclic AMP pathway. Plays a role in dendrite formation by melanocytes. The sequence is that of RasGAP-activating-like protein 1 from Mus musculus (Mouse).